Consider the following 258-residue polypeptide: Sec-independent protein translocase protein TatC (258 aa).

At 2 to 23 the chain is on the cytoplasmic side; the sequence is SVEDTQPLITHLIELRKRLLNC. The chain crosses the membrane as a helical span at residues 24 to 44; the sequence is IIAVIVIFLCLVYFANDIYHL. Residues 45–75 lie on the Periplasmic side of the membrane; it reads VSAPLIKQLPQGSTMIATDVASPFFTPIKLT. The helical transmembrane segment at 76 to 96 threads the bilayer; that stretch reads FMVSLILSAPVILYQVWAFIA. Topologically, residues 97 to 115 are cytoplasmic; the sequence is PALYKHERRLVVPLLVSSS. Residues 116-136 form a helical membrane-spanning segment; the sequence is LLFYIGMAFAYFVVFPLAFGF. The Periplasmic portion of the chain corresponds to 137-156; the sequence is LANTAPEGVQVSTDIASYLS. A helical membrane pass occupies residues 157–177; it reads FVMALFMAFGVSFEVPVAIVL. Over 178-192 the chain is Cytoplasmic; it reads LCWMGITSPEDLRKK. Residues 193–210 traverse the membrane as a helical segment; the sequence is RPYVLVGAFVVGMLLTPP. A topological domain (periplasmic) is located at residue D211. A helical membrane pass occupies residues 212 to 232; the sequence is VFSQTLLAIPMYCLFEIGVFF. Residues 233-258 are Cytoplasmic-facing; that stretch reads SRFYVGKGRNREEENDAEAESEKTEE.

Belongs to the TatC family. In terms of assembly, the Tat system comprises two distinct complexes: a TatABC complex, containing multiple copies of TatA, TatB and TatC subunits, and a separate TatA complex, containing only TatA subunits. Substrates initially bind to the TatABC complex, which probably triggers association of the separate TatA complex to form the active translocon. TatC can form a distinct, stable, multimeric complex independent of TatA and TatB. Each of TatA, TatB and TatC are able to interact in pairs without the third partner. Interacts with the signal sequence of DmsA and DmsD.

The protein localises to the cell inner membrane. Its function is as follows. Part of the twin-arginine translocation (Tat) system that transports large folded proteins containing a characteristic twin-arginine motif in their signal peptide across membranes. Together with TatB, TatC is part of a receptor directly interacting with Tat signal peptides. The protein is Sec-independent protein translocase protein TatC of Escherichia coli (strain K12).